The sequence spans 1802 residues: Protein TIC 214 (1802 aa).

A run of 6 helical transmembrane segments spans residues 19-39 (IINSVVVVGLYYGFLTTFSIG), 68-88 (FIAGQLMMFISIYYAPLHLAL), 91-111 (PHTITVLALPYLLFHFFWNNH), 133-153 (VFLNNLIFQLFNHFILPSSML), 176-196 (VGWLIGHILFMKWVGLVLVWI), and 227-247 (IFSILLFITCVYYLGRIPSPI).

It belongs to the TIC214 family. In terms of assembly, part of the Tic complex.

Its subcellular location is the plastid. It localises to the chloroplast inner membrane. In terms of biological role, involved in protein precursor import into chloroplasts. May be part of an intermediate translocation complex acting as a protein-conducting channel at the inner envelope. The protein is Protein TIC 214 of Nasturtium officinale (Watercress).